Here is a 447-residue protein sequence, read N- to C-terminus: Hemogen (447 aa).

Positions 1–91 are disordered; the sequence is MDLGKDQSLS…EMKVELPSQL (91 aa). Positions 7 to 86 are necessary for nuclear localization; the sequence is QSLSKLHQTP…RQQNTEMKVE (80 aa). 2 stretches are compositionally biased toward basic and acidic residues: residues 14–25 and 35–49; these read QTPDHHQEESHV and RNRE…EAQE. Positions 59–78 are enriched in basic residues; it reads EKKHKRQRTGKRSERGRKRQ. Phosphoserine occurs at positions 89 and 122. Residues 137–156 form a disordered region; that stretch reads QESVTLQENSSEYQATAVQN. At Ser200 the chain carries Phosphoserine. Disordered regions lie at residues 210-280 and 306-337; these read AKVL…MAVP and AMSK…PGSE. The residue at position 217 (Thr217) is a Phosphothreonine. A compositionally biased stretch (basic and acidic residues) spans 306–316; the sequence is AMSKDPSHKTT.

Its subcellular location is the nucleus. Regulates the proliferation and differentiation of hematopoietic cells. Overexpression block the TPA-induced megakaryocytic differentiation in the K562 cell model. May also prevent cell apoptosis through the activation of the nuclear factor-kappa B (NF-kB). The sequence is that of Hemogen (HEMGN) from Bos taurus (Bovine).